We begin with the raw amino-acid sequence, 435 residues long: Methylenetetrahydrofolate--tRNA-(uracil-5-)-methyltransferase TrmFO (435 aa).

7-12 provides a ligand contact to FAD; it reads GAGLAG.

This sequence belongs to the MnmG family. TrmFO subfamily. FAD serves as cofactor.

The protein localises to the cytoplasm. It carries out the reaction uridine(54) in tRNA + (6R)-5,10-methylene-5,6,7,8-tetrahydrofolate + NADH + H(+) = 5-methyluridine(54) in tRNA + (6S)-5,6,7,8-tetrahydrofolate + NAD(+). The catalysed reaction is uridine(54) in tRNA + (6R)-5,10-methylene-5,6,7,8-tetrahydrofolate + NADPH + H(+) = 5-methyluridine(54) in tRNA + (6S)-5,6,7,8-tetrahydrofolate + NADP(+). In terms of biological role, catalyzes the folate-dependent formation of 5-methyl-uridine at position 54 (M-5-U54) in all tRNAs. The sequence is that of Methylenetetrahydrofolate--tRNA-(uracil-5-)-methyltransferase TrmFO from Thermotoga petrophila (strain ATCC BAA-488 / DSM 13995 / JCM 10881 / RKU-1).